We begin with the raw amino-acid sequence, 528 residues long: (R)-citramalate synthase (528 aa).

One can recognise a Pyruvate carboxyltransferase domain in the interval 5–271 (VYIYDTTLRD…IPQENLKKLT (267 aa)).

Belongs to the alpha-IPM synthase/homocitrate synthase family.

The enzyme catalyses pyruvate + acetyl-CoA + H2O = (3R)-citramalate + CoA + H(+). It functions in the pathway amino-acid biosynthesis; L-isoleucine biosynthesis; 2-oxobutanoate from pyruvate: step 1/3. Catalyzes the condensation of pyruvate and acetyl-coenzyme A to form (R)-citramalate. This chain is (R)-citramalate synthase, found in Aquifex aeolicus (strain VF5).